Reading from the N-terminus, the 511-residue chain is uncharacterized protein (511 aa).

Positions 13 to 45 constitute a LisH domain; the sequence is IYDALNMLVYDYLLKMKYEGSAKIFFNEAGLEN. The disordered stretch occupies residues 172–212; it reads PRFEEQGVPPAKMAPKQFRDEGRSGNVESPSIATNQEGSSP. Residues 197–210 show a composition bias toward polar residues; the sequence is NVESPSIATNQEGS.

This is an uncharacterized protein from Encephalitozoon cuniculi (strain GB-M1) (Microsporidian parasite).